We begin with the raw amino-acid sequence, 255 residues long: Epoxyqueuosine reductase QueH (255 aa).

Cys44, Cys45, Cys128, and Cys131 together coordinate [4Fe-4S] cluster. A disulfide bridge connects residues Cys210 and Cys212.

The protein belongs to the QueH family.

The enzyme catalyses epoxyqueuosine(34) in tRNA + AH2 = queuosine(34) in tRNA + A + H2O. Its pathway is tRNA modification; tRNA-queuosine biosynthesis. In terms of biological role, catalyzes the conversion of epoxyqueuosine (oQ) to queuosine (Q), which is a hypermodified base found in the wobble positions of tRNA(Asp), tRNA(Asn), tRNA(His) and tRNA(Tyr). The protein is Epoxyqueuosine reductase QueH of Streptococcus pyogenes serotype M1.